The primary structure comprises 242 residues: Probable transcriptional regulatory protein NMA1902 (242 aa).

It belongs to the TACO1 family.

The protein resides in the cytoplasm. In Neisseria meningitidis serogroup A / serotype 4A (strain DSM 15465 / Z2491), this protein is Probable transcriptional regulatory protein NMA1902.